The following is a 253-amino-acid chain: Sulfate transporter CysZ (253 aa).

4 helical membrane-spanning segments follow: residues 27-47 (FVLLPLSINIVLFCGLIYLAV), 71-91 (ILWPLFVALVLLMVFFTFTVV), 150-170 (LFILSFIPVANIIAAPLWLLF), and 211-231 (IVYVALLIPVVNLLMMPAAVA).

It belongs to the CysZ family.

The protein localises to the cell inner membrane. In terms of biological role, high affinity, high specificity proton-dependent sulfate transporter, which mediates sulfate uptake. Provides the sulfur source for the cysteine synthesis pathway. The protein is Sulfate transporter CysZ of Pseudomonas syringae pv. tomato (strain ATCC BAA-871 / DC3000).